Here is a 190-residue protein sequence, read N- to C-terminus: Peptidyl-tRNA hydrolase (190 aa).

A tRNA-binding site is contributed by Y14. The Proton acceptor role is filled by H19. 3 residues coordinate tRNA: Y64, N66, and N113.

It belongs to the PTH family. As to quaternary structure, monomer.

The protein localises to the cytoplasm. It catalyses the reaction an N-acyl-L-alpha-aminoacyl-tRNA + H2O = an N-acyl-L-amino acid + a tRNA + H(+). Its function is as follows. Hydrolyzes ribosome-free peptidyl-tRNAs (with 1 or more amino acids incorporated), which drop off the ribosome during protein synthesis, or as a result of ribosome stalling. Catalyzes the release of premature peptidyl moieties from peptidyl-tRNA molecules trapped in stalled 50S ribosomal subunits, and thus maintains levels of free tRNAs and 50S ribosomes. The chain is Peptidyl-tRNA hydrolase from Gemmatimonas aurantiaca (strain DSM 14586 / JCM 11422 / NBRC 100505 / T-27).